We begin with the raw amino-acid sequence, 338 residues long: Glyceraldehyde-3-phosphate dehydrogenase, cytosolic (338 aa).

NAD(+) is bound by residues 13 to 14 (RI), Asp-35, and Arg-82. D-glyceraldehyde 3-phosphate contacts are provided by residues 153–155 (SCT), Thr-184, 213–214 (TG), and Arg-236. Cys-154 acts as the Nucleophile in catalysis. Residue Asn-318 participates in NAD(+) binding.

The protein belongs to the glyceraldehyde-3-phosphate dehydrogenase family. In terms of assembly, homotetramer.

It localises to the cytoplasm. The enzyme catalyses D-glyceraldehyde 3-phosphate + phosphate + NAD(+) = (2R)-3-phospho-glyceroyl phosphate + NADH + H(+). It functions in the pathway carbohydrate degradation; glycolysis; pyruvate from D-glyceraldehyde 3-phosphate: step 1/5. Key enzyme in glycolysis that catalyzes the first step of the pathway by converting D-glyceraldehyde 3-phosphate (G3P) into 3-phospho-D-glyceroyl phosphate. Essential for the maintenance of cellular ATP levels and carbohydrate metabolism. The polypeptide is Glyceraldehyde-3-phosphate dehydrogenase, cytosolic (GAPC) (Dianthus caryophyllus (Carnation)).